Consider the following 130-residue polypeptide: Small ribosomal subunit protein uS9 (130 aa).

This sequence belongs to the universal ribosomal protein uS9 family.

The polypeptide is Small ribosomal subunit protein uS9 (Ectopseudomonas mendocina (strain ymp) (Pseudomonas mendocina)).